We begin with the raw amino-acid sequence, 337 residues long: Probable cytosolic iron-sulfur protein assembly protein CIAO1 homolog (337 aa).

WD repeat units lie at residues 15–54 (DDTS…DSKM), 65–104 (SHTR…FAEV), 109–148 (GHES…DFSV), 154–193 (PHTQ…WVTQ), 199–238 (CHVG…SKSA), 253–292 (NTRW…ESPV), and 301–337 (RHEL…ELEI).

This sequence belongs to the WD repeat CIA1 family.

Functionally, essential component of the cytosolic iron-sulfur (Fe/S) protein assembly machinery. Required for the maturation of extramitochondrial Fe/S proteins. The protein is Probable cytosolic iron-sulfur protein assembly protein CIAO1 homolog of Caenorhabditis elegans.